The following is a 310-amino-acid chain: Ribosomal RNA small subunit methyltransferase H (310 aa).

S-adenosyl-L-methionine contacts are provided by residues 33-35 (GGH), aspartate 52, phenylalanine 79, aspartate 98, and glutamine 105.

Belongs to the methyltransferase superfamily. RsmH family.

It is found in the cytoplasm. It catalyses the reaction cytidine(1402) in 16S rRNA + S-adenosyl-L-methionine = N(4)-methylcytidine(1402) in 16S rRNA + S-adenosyl-L-homocysteine + H(+). In terms of biological role, specifically methylates the N4 position of cytidine in position 1402 (C1402) of 16S rRNA. This is Ribosomal RNA small subunit methyltransferase H from Campylobacter jejuni subsp. doylei (strain ATCC BAA-1458 / RM4099 / 269.97).